Reading from the N-terminus, the 242-residue chain is ATP synthase subunit b 2 (242 aa).

The chain crosses the membrane as a helical span at residues 4–24; it reads LLAISSLTLLASLVLLVVSPA. The interval 43-74 is disordered; the sequence is ADSEDGDHDHDHEGDDHGHDEAAGDEHGHGDG. A compositionally biased stretch (basic and acidic residues) spans 49-74; it reads DHDHDHEGDDHGHDEAAGDEHGHGDG.

This sequence belongs to the ATPase B chain family. F-type ATPases have 2 components, F(1) - the catalytic core - and F(0) - the membrane proton channel. F(1) has five subunits: alpha(3), beta(3), gamma(1), delta(1), epsilon(1). F(0) has three main subunits: a(1), b(2) and c(10-14). The alpha and beta chains form an alternating ring which encloses part of the gamma chain. F(1) is attached to F(0) by a central stalk formed by the gamma and epsilon chains, while a peripheral stalk is formed by the delta and b chains.

It localises to the cell inner membrane. In terms of biological role, f(1)F(0) ATP synthase produces ATP from ADP in the presence of a proton or sodium gradient. F-type ATPases consist of two structural domains, F(1) containing the extramembraneous catalytic core and F(0) containing the membrane proton channel, linked together by a central stalk and a peripheral stalk. During catalysis, ATP synthesis in the catalytic domain of F(1) is coupled via a rotary mechanism of the central stalk subunits to proton translocation. Functionally, component of the F(0) channel, it forms part of the peripheral stalk, linking F(1) to F(0). The chain is ATP synthase subunit b 2 from Rhodopirellula baltica (strain DSM 10527 / NCIMB 13988 / SH1).